The following is a 415-amino-acid chain: Gamma-glutamyl phosphate reductase (415 aa).

It belongs to the gamma-glutamyl phosphate reductase family.

The protein resides in the cytoplasm. It carries out the reaction L-glutamate 5-semialdehyde + phosphate + NADP(+) = L-glutamyl 5-phosphate + NADPH + H(+). It participates in amino-acid biosynthesis; L-proline biosynthesis; L-glutamate 5-semialdehyde from L-glutamate: step 2/2. Catalyzes the NADPH-dependent reduction of L-glutamate 5-phosphate into L-glutamate 5-semialdehyde and phosphate. The product spontaneously undergoes cyclization to form 1-pyrroline-5-carboxylate. The polypeptide is Gamma-glutamyl phosphate reductase (Listeria monocytogenes serotype 4b (strain F2365)).